A 498-amino-acid polypeptide reads, in one-letter code: Probable malate:quinone oxidoreductase (498 aa).

It belongs to the MQO family. Requires FAD as cofactor.

It catalyses the reaction (S)-malate + a quinone = a quinol + oxaloacetate. The protein operates within carbohydrate metabolism; tricarboxylic acid cycle; oxaloacetate from (S)-malate (quinone route): step 1/1. This Prochlorococcus marinus (strain MIT 9312) protein is Probable malate:quinone oxidoreductase.